A 105-amino-acid chain; its full sequence is Heat shock protein HspQ (105 aa).

Positions Gly75–Asn105 are disordered.

It belongs to the HspQ family.

It is found in the cytoplasm. Its function is as follows. Involved in the degradation of certain denaturated proteins, including DnaA, during heat shock stress. The sequence is that of Heat shock protein HspQ from Serratia proteamaculans (strain 568).